The primary structure comprises 119 residues: Holo-[acyl-carrier-protein] synthase (119 aa).

Residues aspartate 8 and glutamate 58 each contribute to the Mg(2+) site.

The protein belongs to the P-Pant transferase superfamily. AcpS family. Mg(2+) serves as cofactor.

The protein localises to the cytoplasm. The catalysed reaction is apo-[ACP] + CoA = holo-[ACP] + adenosine 3',5'-bisphosphate + H(+). Transfers the 4'-phosphopantetheine moiety from coenzyme A to a Ser of acyl-carrier-protein. This chain is Holo-[acyl-carrier-protein] synthase, found in Bacillus thuringiensis subsp. konkukian (strain 97-27).